An 80-amino-acid polypeptide reads, in one-letter code: Cell division activator CedA (80 aa).

Belongs to the CedA family.

Its function is as follows. Activates the cell division inhibited by chromosomal DNA over-replication. The sequence is that of Cell division activator CedA from Salmonella arizonae (strain ATCC BAA-731 / CDC346-86 / RSK2980).